The primary structure comprises 470 residues: uncharacterized protein (470 aa).

The tract at residues 439-470 (SIKSSKSKKQLKSSKSKKPIKHTKTKNIYVET) is disordered. Residues 443-463 (SKSKKQLKSSKSKKPIKHTKT) are compositionally biased toward basic residues.

This is an uncharacterized protein from Acanthamoeba polyphaga mimivirus (APMV).